Reading from the N-terminus, the 160-residue chain is Ribosomal RNA large subunit methyltransferase H (160 aa).

S-adenosyl-L-methionine-binding positions include Leu-77, Gly-109, and 128-133; that span reads FGRITL.

It belongs to the RNA methyltransferase RlmH family. Homodimer.

It is found in the cytoplasm. The catalysed reaction is pseudouridine(1915) in 23S rRNA + S-adenosyl-L-methionine = N(3)-methylpseudouridine(1915) in 23S rRNA + S-adenosyl-L-homocysteine + H(+). Its function is as follows. Specifically methylates the pseudouridine at position 1915 (m3Psi1915) in 23S rRNA. The chain is Ribosomal RNA large subunit methyltransferase H from Oenococcus oeni (strain ATCC BAA-331 / PSU-1).